The chain runs to 76 residues: MKLTCVLIIAVLFLMDNQLITADYPRDEQVYRAVRLRDAMQKSKGSGSCAYISEPCDILPCCPGLKCNEDFVPICL.

Residues 1–22 (MKLTCVLIIAVLFLMDNQLITA) form the signal peptide. The propeptide occupies 23-48 (DYPRDEQVYRAVRLRDAMQKSKGSGS). Cystine bridges form between Cys49-Cys62, Cys56-Cys67, and Cys61-Cys75.

It belongs to the conotoxin O1 superfamily. As to expression, expressed by the venom duct.

The protein resides in the secreted. The chain is Conotoxin Lt6.1 from Conus litteratus (Lettered cone).